Here is a 212-residue protein sequence, read N- to C-terminus: Orotate phosphoribosyltransferase (212 aa).

5-phospho-alpha-D-ribose 1-diphosphate-binding positions include Arg97, Lys101, His103, and 123-131 (EDLISTGGS). Residue Ser127 coordinates orotate.

Belongs to the purine/pyrimidine phosphoribosyltransferase family. PyrE subfamily. In terms of assembly, homodimer. It depends on Mg(2+) as a cofactor.

It carries out the reaction orotidine 5'-phosphate + diphosphate = orotate + 5-phospho-alpha-D-ribose 1-diphosphate. It functions in the pathway pyrimidine metabolism; UMP biosynthesis via de novo pathway; UMP from orotate: step 1/2. Functionally, catalyzes the transfer of a ribosyl phosphate group from 5-phosphoribose 1-diphosphate to orotate, leading to the formation of orotidine monophosphate (OMP). The polypeptide is Orotate phosphoribosyltransferase (Phocaeicola vulgatus (strain ATCC 8482 / DSM 1447 / JCM 5826 / CCUG 4940 / NBRC 14291 / NCTC 11154) (Bacteroides vulgatus)).